The primary structure comprises 468 residues: 3-isopropylmalate dehydratase large subunit (468 aa).

Residues Cys-345, Cys-405, and Cys-408 each coordinate [4Fe-4S] cluster.

It belongs to the aconitase/IPM isomerase family. LeuC type 1 subfamily. As to quaternary structure, heterodimer of LeuC and LeuD. Requires [4Fe-4S] cluster as cofactor.

It catalyses the reaction (2R,3S)-3-isopropylmalate = (2S)-2-isopropylmalate. The protein operates within amino-acid biosynthesis; L-leucine biosynthesis; L-leucine from 3-methyl-2-oxobutanoate: step 2/4. Its function is as follows. Catalyzes the isomerization between 2-isopropylmalate and 3-isopropylmalate, via the formation of 2-isopropylmaleate. The chain is 3-isopropylmalate dehydratase large subunit from Oceanobacillus iheyensis (strain DSM 14371 / CIP 107618 / JCM 11309 / KCTC 3954 / HTE831).